A 124-amino-acid polypeptide reads, in one-letter code: NAD(P)H-quinone oxidoreductase subunit 5, chloroplastic (124 aa).

The next 3 helical transmembrane spans lie at 22–42 (TPIS…FLVA), 44–64 (LLPL…IGII), and 91–111 (LGYM…FHLI).

This sequence belongs to the complex I subunit 5 family. In terms of assembly, NDH is composed of at least 16 different subunits, 5 of which are encoded in the nucleus.

The protein localises to the plastid. Its subcellular location is the chloroplast thylakoid membrane. The catalysed reaction is a plastoquinone + NADH + (n+1) H(+)(in) = a plastoquinol + NAD(+) + n H(+)(out). It carries out the reaction a plastoquinone + NADPH + (n+1) H(+)(in) = a plastoquinol + NADP(+) + n H(+)(out). NDH shuttles electrons from NAD(P)H:plastoquinone, via FMN and iron-sulfur (Fe-S) centers, to quinones in the photosynthetic chain and possibly in a chloroplast respiratory chain. The immediate electron acceptor for the enzyme in this species is believed to be plastoquinone. Couples the redox reaction to proton translocation, and thus conserves the redox energy in a proton gradient. In Pisum sativum (Garden pea), this protein is NAD(P)H-quinone oxidoreductase subunit 5, chloroplastic (ndhF).